A 460-amino-acid polypeptide reads, in one-letter code: MAVSLWQQCIGRLQDELSAQQFSMWIRPLQAEMDGDTLVLYAPNRFVLDWVRDKYINIINQFFTEQMGNDAPKLRFDIGSRPSAKKPEPAPVAAVRVPNPQTKASVGTSFNTTEPVANANHRSNINPTYQFDNFVEGKSNQLGKAAALQVAENPGGAYNPLFLYGGTGLGKTHLLHAVGNGIIKNNPDAKVVYMHSERFVQDMVKALQNNAIEEFKRYYRSVDALFIDDIQFFANKDRSQEEFFHTFNALLEGNHQIILTSDRYPKEIDGVEDRLKSRFGWGLTVAIEPPELETRVAILMRKAQESGINLPDEVAFFIAKRLRSNVRELEGALNRVIANANFTGRPITIDFVREALRDLLALQEKLVTIDNIQKTVAEYYKIKMADMLSKRRSRSVARPRQVAMALSKELTNQSLPEIGDAFGGRDHTTVLHACRKIAQLREESHDIKEDYANLIRTLSS.

The segment at 1–84 is domain I, interacts with DnaA modulators; the sequence is MAVSLWQQCI…RFDIGSRPSA (84 aa). The tract at residues 84 to 123 is domain II; it reads AKKPEPAPVAAVRVPNPQTKASVGTSFNTTEPVANANHRS. The segment at 124–340 is domain III, AAA+ region; the sequence is NINPTYQFDN…GALNRVIANA (217 aa). ATP is bound by residues Gly168, Gly170, Lys171, and Thr172. The domain IV, binds dsDNA stretch occupies residues 341–460; that stretch reads NFTGRPITID…YANLIRTLSS (120 aa).

This sequence belongs to the DnaA family. Oligomerizes as a right-handed, spiral filament on DNA at oriC.

It localises to the cytoplasm. Functionally, plays an essential role in the initiation and regulation of chromosomal replication. ATP-DnaA binds to the origin of replication (oriC) to initiate formation of the DNA replication initiation complex once per cell cycle. Binds the DnaA box (a 9 base pair repeat at the origin) and separates the double-stranded (ds)DNA. Forms a right-handed helical filament on oriC DNA; dsDNA binds to the exterior of the filament while single-stranded (ss)DNA is stabiized in the filament's interior. The ATP-DnaA-oriC complex binds and stabilizes one strand of the AT-rich DNA unwinding element (DUE), permitting loading of DNA polymerase. After initiation quickly degrades to an ADP-DnaA complex that is not apt for DNA replication. Binds acidic phospholipids. The sequence is that of Chromosomal replication initiator protein DnaA from Shewanella sp. (strain ANA-3).